A 200-amino-acid chain; its full sequence is Thymidine kinase (200 aa).

Residues 15-22 (GSMFSGKS) and 88-91 (DEVQ) contribute to the ATP site. The Proton acceptor role is filled by glutamate 89. Residues cysteine 145, cysteine 148, cysteine 183, and histidine 186 each contribute to the Zn(2+) site.

It belongs to the thymidine kinase family. Homotetramer.

The protein resides in the cytoplasm. The enzyme catalyses thymidine + ATP = dTMP + ADP + H(+). This chain is Thymidine kinase, found in Bacillus pumilus (strain SAFR-032).